Here is an 82-residue protein sequence, read N- to C-terminus: U1-plectoxin-Pt1a (82 aa).

The N-terminal stretch at Met-1–Ala-20 is a signal peptide. Positions Glu-21–Arg-33 are excised as a propeptide. 5 cysteine pairs are disulfide-bonded: Cys-37/Cys-51, Cys-44/Cys-57, Cys-50/Cys-68, Cys-54/Cys-77, and Cys-59/Cys-66. Ser-79 is lipidated: O-palmitoyl serine. The propeptide occupies Arg-80 to Arg-82.

It belongs to the neurotoxin 02 (plectoxin) family. 02 (plectoxin) subfamily. Plectoxin-5 presumably undergoes post-translational modification to give rise to plectoxin-6. In terms of tissue distribution, expressed by the venom gland.

The protein resides in the secreted. In terms of biological role, potent toxin that may paralyze and/or kill insect pests such as H.virescens (lepidoptera), S.exigua (beet armyworm) and M.sexta (tobacco hornworm). The chain is U1-plectoxin-Pt1a from Plectreurys tristis (Spider).